Here is a 1516-residue protein sequence, read N- to C-terminus: Myosin-52 (1516 aa).

The Myosin N-terminal SH3-like domain maps to 7-62; that stretch reads YKGLQCWIPDEQSQWIPGSIKDCRVEGEKAFLTVQDENENETVITVKPDDLNYEGR. In terms of domain architecture, Myosin motor spans 73–766; sequence SDADDLTDLS…VTPLLESARD (694 aa). ATP is bound at residue 167–174; that stretch reads GESGAGKT. Positions 647-669 are actin-binding; it reads LVSLMSTINETNAHYIRCIKPNE. IQ domains follow at residues 793 to 813, 818 to 838, 840 to 865, 866 to 886, and 888 to 917; these read RKRVRSFQAVAHGFLSRRHTE, SSNIIKLQSLWRTALKRKEFI, TKNSILKVQSIIRGFLLRQTLEEKTK, HDATLIIQSLWLTFKAHKHYK, and LQYYAVRIQSLWRMKLAKRQLTELKIESTK. A coiled-coil region spans residues 926–1034; it reads YRLESRLFEI…LKSQLKNYDM (109 aa). 2 positions are modified to phosphoserine: Ser-1065 and Ser-1072. A Dilute domain is found at 1163-1431; it reads ERYCVHTLEY…SELSKNIVAE (269 aa).

The protein belongs to the TRAFAC class myosin-kinesin ATPase superfamily. Myosin family.

The protein resides in the cytoplasm. In terms of biological role, involved in cell wall deposition where it has a role in the localization of mok1. This chain is Myosin-52 (myo52), found in Schizosaccharomyces pombe (strain 972 / ATCC 24843) (Fission yeast).